The primary structure comprises 450 residues: Cytochrome c1 (450 aa).

The signal sequence occupies residues 1–21 (MTLRNASLTAVAALTVALAGG). Residues 24–58 (AQDASTAPGTTAPAGSSYHTNEAAPAAADTAPAAE) show a composition bias toward low complexity. Residues 24–210 (AQDASTAPGT…AAAQEAGDSH (187 aa)) are disordered. Composition is skewed to acidic residues over residues 59–77 (AADE…EVTE), 85–108 (PAEE…EPAA), and 118–194 (APAE…EDEA). 3 residues coordinate heme c: Cys-245, Cys-248, and His-249. The interval 284–305 (PETEEDRPRVPTDHFPTVSGEG) is disordered. Residue Met-373 participates in heme c binding. The helical transmembrane segment at 421–435 (SVIFLIVLAALLYLT) threads the bilayer.

As to quaternary structure, the main subunits of complex b-c1 are: cytochrome b, cytochrome c1 and the Rieske protein. In terms of processing, binds 1 heme c group covalently per subunit.

The protein resides in the cell membrane. Component of the ubiquinol-cytochrome c reductase complex (complex III or cytochrome b-c1 complex), which is a respiratory chain that generates an electrochemical potential coupled to ATP synthesis. c1 functions as an electron donor to cytochrome c. This is Cytochrome c1 (petC) from Paracoccus denitrificans.